The chain runs to 694 residues: Elongation factor G (694 aa).

Positions Lys8 to Val282 constitute a tr-type G domain. GTP is bound by residues Ala17 to Thr24, Asp81 to His85, and Asn135 to Asp138.

This sequence belongs to the TRAFAC class translation factor GTPase superfamily. Classic translation factor GTPase family. EF-G/EF-2 subfamily.

It localises to the cytoplasm. Catalyzes the GTP-dependent ribosomal translocation step during translation elongation. During this step, the ribosome changes from the pre-translocational (PRE) to the post-translocational (POST) state as the newly formed A-site-bound peptidyl-tRNA and P-site-bound deacylated tRNA move to the P and E sites, respectively. Catalyzes the coordinated movement of the two tRNA molecules, the mRNA and conformational changes in the ribosome. This chain is Elongation factor G, found in Mesomycoplasma hyopneumoniae (strain J / ATCC 25934 / NCTC 10110) (Mycoplasma hyopneumoniae).